A 607-amino-acid polypeptide reads, in one-letter code: Glutamine--fructose-6-phosphate aminotransferase [isomerizing] (607 aa).

The active-site Nucleophile; for GATase activity is cysteine 2. One can recognise a Glutamine amidotransferase type-2 domain in the interval 2-218 (CGIIGYSGSK…DGDVVLVTKD (217 aa)). 2 consecutive SIS domains span residues 280 to 424 (FDEQ…KLGK) and 457 to 597 (IAKK…VDKP). Lysine 602 acts as the For Fru-6P isomerization activity in catalysis.

As to quaternary structure, homodimer.

The protein resides in the cytoplasm. It catalyses the reaction D-fructose 6-phosphate + L-glutamine = D-glucosamine 6-phosphate + L-glutamate. Functionally, catalyzes the first step in hexosamine metabolism, converting fructose-6P into glucosamine-6P using glutamine as a nitrogen source. This is Glutamine--fructose-6-phosphate aminotransferase [isomerizing] from Fusobacterium nucleatum subsp. nucleatum (strain ATCC 25586 / DSM 15643 / BCRC 10681 / CIP 101130 / JCM 8532 / KCTC 2640 / LMG 13131 / VPI 4355).